Reading from the N-terminus, the 192-residue chain is Imidazoleglycerol-phosphate dehydratase (192 aa).

This sequence belongs to the imidazoleglycerol-phosphate dehydratase family.

The protein resides in the cytoplasm. It carries out the reaction D-erythro-1-(imidazol-4-yl)glycerol 3-phosphate = 3-(imidazol-4-yl)-2-oxopropyl phosphate + H2O. The protein operates within amino-acid biosynthesis; L-histidine biosynthesis; L-histidine from 5-phospho-alpha-D-ribose 1-diphosphate: step 6/9. This chain is Imidazoleglycerol-phosphate dehydratase, found in Vesicomyosocius okutanii subsp. Calyptogena okutanii (strain HA).